The sequence spans 63 residues: Laccase-C1 (63 aa).

It belongs to the multicopper oxidase family. In terms of assembly, monomer. Cu cation is required as a cofactor. Glycosylated; contains 16% carbohydrates.

The protein localises to the secreted. It carries out the reaction 4 hydroquinone + O2 = 4 benzosemiquinone + 2 H2O. With respect to regulation, inhibited by sodium azide. Functionally, lignin degradation and detoxification of lignin-derived products. Oxidation of a broad range of substrates including mono-, di- and polyphenols, aromatic amines and methoxy-substituted phenols accompanied by reduction of oxygen to water. The protein is Laccase-C1 of Cerrena unicolor (Canker rot fungus).